A 346-amino-acid polypeptide reads, in one-letter code: Prepilin peptidase EppA (346 aa).

10 consecutive transmembrane segments (helical) span residues 1-21 (MFGF…LILT), 31-51 (IIPH…GYYF), 56-76 (AITS…GMGG), 77-97 (GDVK…IYFV), 101-121 (ISIL…TKIL), 128-148 (IIPS…ITEI), 149-169 (YSIG…IFIS), 182-202 (LGYI…AYFV), 206-226 (VLIS…VIYA), and 321-341 (PFVP…MGVI).

Belongs to the peptidase A24 family.

It is found in the cell membrane. Functionally, peptidase that processes the N-terminus of prepilins. Specifically cleaves proteins with a class III (type IV pilin-like) signal sequence, such as the major structural pilin EpdE and the minor pilins EpdA, EpdC and EpdD. Is not able to cleave the preflagellin subunit FlaB2. The chain is Prepilin peptidase EppA from Methanococcus maripaludis (strain DSM 14266 / JCM 13030 / NBRC 101832 / S2 / LL).